Consider the following 212-residue polypeptide: Prolactin-3C1 (212 aa).

Positions 1–29 (MQLSLTQARTWKGLFLLVSCMFLWVYVTA) are cleaved as a signal peptide. An intrachain disulfide couples Cys80 to Cys188. A glycan (N-linked (GlcNAc...) asparagine) is linked at Asn100.

The protein belongs to the somatotropin/prolactin family. Expressed exclusively in decidua.

The protein localises to the secreted. This chain is Prolactin-3C1 (Prl3c1), found in Mus musculus (Mouse).